The primary structure comprises 302 residues: Putative gluconeogenesis factor (302 aa).

It belongs to the gluconeogenesis factor family.

It is found in the cytoplasm. Functionally, required for morphogenesis under gluconeogenic growth conditions. This is Putative gluconeogenesis factor (ybhK) from Escherichia coli O157:H7.